We begin with the raw amino-acid sequence, 274 residues long: (R)-stereoselective amidase (274 aa).

One can recognise a CN hydrolase domain in the interval 1–234 (MKIELVQLAG…EVRHVVELDL (234 aa)). Glu-40 (proton acceptor) is an active-site residue. The active-site Proton donor is the Lys-108. Cys-140 serves as the catalytic Nucleophile.

Monomer.

The catalysed reaction is (R)-piperazine-2-carboxamide + H2O = (R)-piperazine-2-carboxylate + NH4(+). It catalyses the reaction beta-alaninamide + H2O = beta-alanine + NH4(+). With respect to regulation, completely inhibited by p-chloromercuribenzoate, N-ethylmaleimide, MnSO(4), MnCl(2), CoCl(2), NiCl(2), CuSO(4), CuCl(2), ZnSO(4), ZnCl(2), AgNO(3), CdCl(2), HgCl(2) and PbCl(2). Partially inhibited by FeCl(3) and Fe(NH(4))(2)(SO(4))(2). Slightly enhanced by dithiothreitol. Unaffected by LiBr, H(2)BO(3), NaCl, MgSO(4), MgCl(2), AlCl(3), KCl, CaCl(2), CrCl(3), RbCl, Na(2)MoO(4), (NH(4))(6)Mo(7)O(24), CsCl and BaCl(2). Unaffected by the chelating agents o-phenanthroline, 8-hydroxyquinoline, enthylenediaminetetraacetic acid and alpha,alpha'-dipyridyl. Not inhibited by the carbonyl reagents hydroxylamine, phenylhydrazine, hydrazine, D,L-penicillamine and D-cycloserine. Not affected by the serine protease inhibitor phenylmethanesulfonyl fluoride, the serine/cysteine protease inhibitor leupeptine or the aspartic protease inhibitor pepstatin. Functionally, hydrolyzes (R)-piperazine-2-carboxamide and (R)-piperazine-2-tert-butylcarboxamide with strict R-stereoselectivity. Also active towards beta-alaninamide, piperidine-3-carboxmide, D-glutaminamide and slightly active towards L-glutaminamide and piperidine-4-carboxamide. This is (R)-stereoselective amidase from Pseudomonas sp.